Reading from the N-terminus, the 225-residue chain is Plasma membrane-associated cation-binding protein 1 (225 aa).

Gly2 carries the N-myristoyl glycine lipid modification. A Phosphothreonine modification is found at Thr32. Position 107 is a phosphoserine (Ser107). The span at 140 to 197 (PVEEVKAEEPAKTEEPAKTEGTSGEKEEIVEETKKGETPETAVVEEKKPEVEEKKEEA) shows a compositional bias: basic and acidic residues. The tract at residues 140 to 225 (PVEEVKAEEP…TAPVAEPPKP (86 aa)) is disordered. Phosphothreonine occurs at positions 152 and 177.

The protein belongs to the DREPP family. As to quaternary structure, interacts with Turnip mosaic virus (TuMV) P3N-PIPO. Cu(2+) is required as a cofactor. In terms of tissue distribution, mostly expressed in the basal region of hypocotyls. Expressed in seedlings, roots, shoots, stems, leaves (e.g. in epidermis and vascular tissues), flowers (e.g. in pistils and anthers) and siliques (at protein level).

It is found in the cell membrane. Its subcellular location is the cytoplasm. It localises to the cytoskeleton. The protein localises to the cell junction. The protein resides in the plasmodesma. Functionally, may be involved in intracellular signaling through interaction with PtdInsPs and calmodulin (CaM); may keep PtdInsPs attached to the plasma membrane until Ca(2+)-CaM reaches a competitive concentration subsequent to an increase triggered by a stimulus, thus leading to PtdInsPs release and subsequent activation of InsPs-dependent signaling cascade. Interacts competitively at the N-terminus with calcium ions and CaM (in a calcium-dependent manner), and with the phosphatidylinositol phosphates PtdIns(3,4,5)P(3), PtdIns(3,4)P(2), PtdIns(4,5)P(2) and PtdIns(3,5)P(2). Also binds weakly to PtdIns(3)P, PtdIns(4)P and PtdIns(5)P. Negative regulator of hypocotyl cell elongation by destabilizing cortical microtubules in a calcium-dependent manner. Binds directly to and destabilized microtubules to enhance microtubule depolymerization when cytoplasmic calcium increases. In case of Turnip mosaic virus (TuMV) infection, confers sensitivity by promoting viral cell-to-cell movement through interaction with viral P3N-PIPO. The sequence is that of Plasma membrane-associated cation-binding protein 1 (PCAP1) from Arabidopsis thaliana (Mouse-ear cress).